Consider the following 101-residue polypeptide: Protein S100-A7A (101 aa).

EF-hand domains are found at residues 13-48 (MIDMFHKYTGRDGKIEKPSLLTMMKENFPNFLSACD) and 50-85 (KGIHYLATVFEKKDKNEDKKIDFSEFLSLLGDIAAD). Zn(2+) contacts are provided by histidine 18, glutamate 28, and glutamate 38. Ca(2+) is bound by residues aspartate 63 and asparagine 65. Zn(2+) is bound at residue glutamate 66. Ca(2+) contacts are provided by aspartate 67, lysine 69, and glutamate 74. Zn(2+)-binding residues include histidine 87 and histidine 91.

It belongs to the S-100 family. In terms of tissue distribution, overexpressed in psoriasis.

It is found in the cytoplasm. Functionally, may be involved in epidermal differentiation and inflammation and might therefore be important for the pathogenesis of psoriasis and other diseases. This Homo sapiens (Human) protein is Protein S100-A7A (S100A7A).